We begin with the raw amino-acid sequence, 51 residues long: Sperm protamine P1 (51 aa).

Belongs to the protamine P1 family. In terms of assembly, cross-linked by interchain disulfide bonds around the DNA-helix. In terms of tissue distribution, testis.

Its subcellular location is the nucleus. It localises to the chromosome. Protamines substitute for histones in the chromatin of sperm during the haploid phase of spermatogenesis. They compact sperm DNA into a highly condensed, stable and inactive complex. The protein is Sperm protamine P1 (PRM1) of Hylobates lar (Lar gibbon).